The following is a 291-amino-acid chain: Methylsterol monooxygenase 1-3 (291 aa).

The next 3 membrane-spanning stretches (helical) occupy residues 41–61, 92–112, and 114–134; these read TILVLFLVFSLAPFPLVIVEW, FLLVVGTLQIVSYPSIQMVGI, and SGLPLPSLMEIVAQLVVYFLI. The Fatty acid hydroxylase domain maps to 128-263; it reads LVVYFLIEDY…FTYCDYIYGT (136 aa). Residues 143-147 carry the Histidine box-1 motif; the sequence is HRWMH. Positions 156 to 160 match the Histidine box-2 motif; sequence HRIHH. A helical transmembrane segment spans residues 178–198; the sequence is ILILGIPTFLGPAIAPGHIMT. The Histidine box-3 signature appears at 235 to 241; that stretch reads YHDYHHY.

The protein belongs to the sterol desaturase family. Interacts with ACBP1. Fe cation is required as a cofactor. Expressed at low levels in leaves, roots, siliques and flowers.

It localises to the endoplasmic reticulum membrane. It catalyses the reaction 4,4-dimethyl-5alpha-cholest-7-en-3beta-ol + 6 Fe(II)-[cytochrome b5] + 3 O2 + 5 H(+) = 4alpha-carboxy-4beta-methyl-5alpha-cholest-7-ene-3beta-ol + 6 Fe(III)-[cytochrome b5] + 4 H2O. It carries out the reaction 24-methylidenelophenol + 6 Fe(II)-[cytochrome b5] + 3 O2 + 5 H(+) = 4alpha-carboxy-ergosta-7,24(24(1))-dien-3beta-ol + 6 Fe(III)-[cytochrome b5] + 4 H2O. In terms of biological role, non-heme iron oxygenase involved in sterols biosynthesis by catalyzing the removal of the first methyl group at the C-4 position. 4,4-dimethyl-9-beta,19-cyclopropylsterols such as 24-methylenecycloartanol are the preferred substrates. This is Methylsterol monooxygenase 1-3 from Arabidopsis thaliana (Mouse-ear cress).